The sequence spans 321 residues: MIISAYIMPLRLPKPGLRNIDGHLLYLEHAGPHMATLQIVNNVLSSEMTSAGQLVETVDLELFGKSLFIEHIIMITLYDEYIYHETLVHPTLLSLENPEKVLIIGGGDGGALREVLKHPVGEVTLVELDKSVIETVKKHIPEVPGGSFEDPRLKLIIGDGRKYVESCEEKYDAVILDLTDPYGQAVRLYTKEFYSMVRKLIRDGGLMVTHSEGVHVNRVTFQRIYRAIRETFKRHAVAKAYVPSFNDEWSFSFGSDYLVPPELDREKLERRFNERLKGKTRFYLPEIHYALFSLPAYLKAALEEEVPPSTDDNPAEIYEES.

Residues 23–256 (HLLYLEHAGP…DEWSFSFGSD (234 aa)) enclose the PABS domain. An S-methyl-5'-thioadenosine-binding site is contributed by glutamine 53. Histidine 84 and aspartate 108 together coordinate spermidine. S-methyl-5'-thioadenosine contacts are provided by residues glutamate 127 and 159–160 (DG). Aspartate 177 (proton acceptor) is an active-site residue.

The protein belongs to the spermidine/spermine synthase family. Homodimer or homotetramer.

It is found in the cytoplasm. The catalysed reaction is S-adenosyl 3-(methylsulfanyl)propylamine + putrescine = S-methyl-5'-thioadenosine + spermidine + H(+). The protein operates within amine and polyamine biosynthesis; spermidine biosynthesis; spermidine from putrescine: step 1/1. Catalyzes the irreversible transfer of a propylamine group from the amino donor S-adenosylmethioninamine (decarboxy-AdoMet) to putrescine (1,4-diaminobutane) to yield spermidine. This Korarchaeum cryptofilum (strain OPF8) protein is Polyamine aminopropyltransferase.